We begin with the raw amino-acid sequence, 37 residues long: Large ribosomal subunit protein bL36 (37 aa).

Belongs to the bacterial ribosomal protein bL36 family.

The chain is Large ribosomal subunit protein bL36 from Cyanothece sp. (strain PCC 7425 / ATCC 29141).